The sequence spans 205 residues: Ribonuclease HII (205 aa).

Residues 1-205 form the RNase H type-2 domain; sequence MLVCGVDEAG…RPARLIEAGG (205 aa). D7, E8, and D105 together coordinate a divalent metal cation.

This sequence belongs to the RNase HII family. Mn(2+) is required as a cofactor. Mg(2+) serves as cofactor.

It localises to the cytoplasm. It catalyses the reaction Endonucleolytic cleavage to 5'-phosphomonoester.. Its function is as follows. Endonuclease that specifically degrades the RNA of RNA-DNA hybrids. The sequence is that of Ribonuclease HII from Cenarchaeum symbiosum (strain A).